A 193-amino-acid polypeptide reads, in one-letter code: Adenylate kinase (193 aa).

Position 10 to 15 (glycine 10 to threonine 15) interacts with ATP. An NMP region spans residues serine 30–valine 59. AMP is bound by residues threonine 31, arginine 36, glycine 57–valine 59, glycine 85–arginine 88, and glutamine 92. An LID region spans residues lysine 126–aspartate 142. An ATP-binding site is contributed by arginine 127. Positions 139 and 150 each coordinate AMP. ATP is bound at residue alanine 178.

It belongs to the adenylate kinase family. Monomer.

It is found in the cytoplasm. It catalyses the reaction AMP + ATP = 2 ADP. It participates in purine metabolism; AMP biosynthesis via salvage pathway; AMP from ADP: step 1/1. In terms of biological role, catalyzes the reversible transfer of the terminal phosphate group between ATP and AMP. Plays an important role in cellular energy homeostasis and in adenine nucleotide metabolism. The polypeptide is Adenylate kinase (Beijerinckia indica subsp. indica (strain ATCC 9039 / DSM 1715 / NCIMB 8712)).